Reading from the N-terminus, the 117-residue chain is Anti-sigma F factor antagonist (117 aa).

Residues 2-115 (HFQLEMVTRE…QAIDRVRGIV (114 aa)) form the STAS domain. Ser58 carries the phosphoserine modification.

It belongs to the anti-sigma-factor antagonist family. Phosphorylated by SpoIIAB on a serine residue.

Its function is as follows. In the phosphorylated form it could act as an anti-anti-sigma factor that counteracts SpoIIAB and thus releases sigma f from inhibition. This chain is Anti-sigma F factor antagonist (spoIIAA), found in Lysinibacillus sphaericus (Bacillus sphaericus).